A 276-amino-acid polypeptide reads, in one-letter code: NADPH-dependent 7-cyano-7-deazaguanine reductase (276 aa).

80 to 82 (VES) provides a ligand contact to substrate. 82–83 (SK) provides a ligand contact to NADPH. Catalysis depends on C183, which acts as the Thioimide intermediate. D190 functions as the Proton donor in the catalytic mechanism. Residue 222 to 223 (HE) coordinates substrate. Residue 251–252 (RG) participates in NADPH binding.

Belongs to the GTP cyclohydrolase I family. QueF type 2 subfamily. As to quaternary structure, homodimer.

It is found in the cytoplasm. It catalyses the reaction 7-aminomethyl-7-carbaguanine + 2 NADP(+) = 7-cyano-7-deazaguanine + 2 NADPH + 3 H(+). It functions in the pathway tRNA modification; tRNA-queuosine biosynthesis. Catalyzes the NADPH-dependent reduction of 7-cyano-7-deazaguanine (preQ0) to 7-aminomethyl-7-deazaguanine (preQ1). The protein is NADPH-dependent 7-cyano-7-deazaguanine reductase of Burkholderia orbicola (strain MC0-3).